Consider the following 110-residue polypeptide: Integration host factor subunit beta (110 aa).

Belongs to the bacterial histone-like protein family. In terms of assembly, heterodimer of an alpha and a beta chain.

In terms of biological role, this protein is one of the two subunits of integration host factor, a specific DNA-binding protein that functions in genetic recombination as well as in transcriptional and translational control. This is Integration host factor subunit beta from Parvibaculum lavamentivorans (strain DS-1 / DSM 13023 / NCIMB 13966).